We begin with the raw amino-acid sequence, 758 residues long: Dachshund homolog 1 (758 aa).

2 disordered regions span residues 1 to 105 (MAVP…SNCN) and 134 to 185 (INAS…TPQN). Residues 20–53 (ISTSASSSGTTTSTSSATSSPAPSIGPPASSGPT) show a composition bias toward low complexity. Over residues 73-102 (TGGGGGGGGSGGGGGSSGNGGGGGGGGGGS) the composition is skewed to gly residues. Residues 140-163 (SSSSSSSSSSSSSSSSSSSSSSSS) are compositionally biased toward low complexity. Residues 174–185 (STPSPVENTPQN) are compositionally biased toward polar residues. Residues 189–275 (KMVDLRGAKV…LISRKDFETL (87 aa)) form a DACHbox-N region. The interval 189-384 (KMVDLRGAKV…VGSSDGSWDK (196 aa)) is interaction with SIX6 and HDAC3. Disordered stretches follow at residues 280-302 (TNAS…PENS), 358-414 (SNNQ…PLSH), 474-532 (SPPS…RIPV), and 544-564 (MGLS…GHDM). Polar residues-rich tracts occupy residues 292–301 (RTQSVTSPEN), 358–380 (SNNQ…SSDG), and 387–399 (LPSS…QASI). The residue at position 491 (Ser491) is a Phosphoserine. Low complexity predominate over residues 506 to 524 (SHPSSHRSSSVSSSPARTE). The segment covering 555 to 564 (KEGDLAGHDM) has biased composition (basic and acidic residues). Residues 616-696 (SSIETLLTNI…KAKRKLQEAL (81 aa)) form a DACHbox-C region. The interval 627–706 (GLLKVAIDNA…EFETKRREQA (80 aa)) is interaction with SIN3A. A coiled-coil region spans residues 630 to 718 (KVAIDNARAQ…TLKQAASTDS (89 aa)).

Belongs to the DACH/dachshund family. In terms of assembly, interacts with SIX1, SIX6 and EYA3. Interacts with NCOR1 and HDAC3 through its N-terminus. Interacts with SIN3A through its C-terminus. Interacts with SMAD3 and SMAD4. In terms of tissue distribution, widely expressed. Isoform 2 is found in brain, heart, kidney, liver, leukocytes and spleen. Isoform 3 is found in liver and heart. Isoform 4 is found in spleen.

It localises to the nucleus. Its function is as follows. Transcription factor that is involved in regulation of organogenesis. Seems to be a regulator of SIX1, SIX6 and probably SIX5. Corepression of precursor cell proliferation in myoblasts by SIX1 is switched to coactivation through recruitment of EYA3 to the SIX1-DACH1 complex. Transcriptional activation also seems to involve association of CREBBP. Seems to act as a corepressor of SIX6 in regulating proliferation by directly repressing cyclin-dependent kinase inhibitors, including the p27Kip1 promoter. Inhibits TGF-beta signaling through interaction with SMAD4 and NCOR1. Binds to chromatin DNA via its DACHbox-N domain. The chain is Dachshund homolog 1 (DACH1) from Homo sapiens (Human).